The following is a 293-amino-acid chain: Bifunctional protein FolD (293 aa).

NADP(+) contacts are provided by residues 165–167 (GRG), threonine 192, and valine 233.

Belongs to the tetrahydrofolate dehydrogenase/cyclohydrolase family. In terms of assembly, homodimer.

It carries out the reaction (6R)-5,10-methylene-5,6,7,8-tetrahydrofolate + NADP(+) = (6R)-5,10-methenyltetrahydrofolate + NADPH. The catalysed reaction is (6R)-5,10-methenyltetrahydrofolate + H2O = (6R)-10-formyltetrahydrofolate + H(+). It participates in one-carbon metabolism; tetrahydrofolate interconversion. Its function is as follows. Catalyzes the oxidation of 5,10-methylenetetrahydrofolate to 5,10-methenyltetrahydrofolate and then the hydrolysis of 5,10-methenyltetrahydrofolate to 10-formyltetrahydrofolate. The sequence is that of Bifunctional protein FolD from Streptomyces griseus subsp. griseus (strain JCM 4626 / CBS 651.72 / NBRC 13350 / KCC S-0626 / ISP 5235).